The sequence spans 194 residues: Isopentenyl-diphosphate Delta-isomerase (194 aa).

Residues histidine 35 and histidine 42 each contribute to the Mn(2+) site. Residues 40 to 174 (PLHLAFSSYL…PWALSPWSVD (135 aa)) enclose the Nudix hydrolase domain. Cysteine 77 is a catalytic residue. Position 79 (histidine 79) interacts with Mn(2+). Mg(2+) is bound at residue glutamate 97. Positions 124 and 126 each coordinate Mn(2+). Glutamate 126 is a catalytic residue.

It belongs to the IPP isomerase type 1 family. Mg(2+) serves as cofactor. It depends on Mn(2+) as a cofactor.

The protein resides in the cytoplasm. It carries out the reaction isopentenyl diphosphate = dimethylallyl diphosphate. It participates in isoprenoid biosynthesis; dimethylallyl diphosphate biosynthesis; dimethylallyl diphosphate from isopentenyl diphosphate: step 1/1. Catalyzes the 1,3-allylic rearrangement of the homoallylic substrate isopentenyl (IPP) to its highly electrophilic allylic isomer, dimethylallyl diphosphate (DMAPP). The polypeptide is Isopentenyl-diphosphate Delta-isomerase (Frankia alni (strain DSM 45986 / CECT 9034 / ACN14a)).